The primary structure comprises 313 residues: Type II methyltransferase M.NlaX (313 aa).

The 307-residue stretch at 2–308 (FKIIDLFAGI…EQMKAALSAV (307 aa)) folds into the SAM-dependent MTase C5-type domain. C74 is an active-site residue.

This sequence belongs to the class I-like SAM-binding methyltransferase superfamily. C5-methyltransferase family.

It carries out the reaction a 2'-deoxycytidine in DNA + S-adenosyl-L-methionine = a 5-methyl-2'-deoxycytidine in DNA + S-adenosyl-L-homocysteine + H(+). Functionally, a methylase, recognizes the double-stranded sequence 5'-CCNGG-3' and methylates C-2 on both strands. May be the equivalent of dcm in this bacteria, or it may protect the DNA from cleavage by the putative NlaXP endonuclease. The protein is Type II methyltransferase M.NlaX (nlaXM) of Neisseria lactamica.